A 161-amino-acid polypeptide reads, in one-letter code: MFFDPETWVAIAFVILMVVFGYLGVFKSAMTALDHRAARIKAELDDATRLKQEAAKVLADYKARSATAEREAADIIANAKVEAERIATEAKAKMEDFVARRTKTAESKIALAEAQAVADVRAAAAEAAVQAASTILSQSVKGQVADDLLAKSISEVRQKLN.

A helical membrane pass occupies residues 6 to 26 (ETWVAIAFVILMVVFGYLGVF).

This sequence belongs to the ATPase B chain family. As to quaternary structure, F-type ATPases have 2 components, F(1) - the catalytic core - and F(0) - the membrane proton channel. F(1) has five subunits: alpha(3), beta(3), gamma(1), delta(1), epsilon(1). F(0) has three main subunits: a(1), b(2) and c(10-14). The alpha and beta chains form an alternating ring which encloses part of the gamma chain. F(1) is attached to F(0) by a central stalk formed by the gamma and epsilon chains, while a peripheral stalk is formed by the delta and b chains.

The protein localises to the cell inner membrane. F(1)F(0) ATP synthase produces ATP from ADP in the presence of a proton or sodium gradient. F-type ATPases consist of two structural domains, F(1) containing the extramembraneous catalytic core and F(0) containing the membrane proton channel, linked together by a central stalk and a peripheral stalk. During catalysis, ATP synthesis in the catalytic domain of F(1) is coupled via a rotary mechanism of the central stalk subunits to proton translocation. Its function is as follows. Component of the F(0) channel, it forms part of the peripheral stalk, linking F(1) to F(0). The polypeptide is ATP synthase subunit b 1 (Bradyrhizobium diazoefficiens (strain JCM 10833 / BCRC 13528 / IAM 13628 / NBRC 14792 / USDA 110)).